The following is a 518-amino-acid chain: UNC5C-like protein (518 aa).

The Extracellular portion of the chain corresponds to 1 to 10 (MSPQESSVQP). The helical; Signal-anchor for type III membrane protein transmembrane segment at 11–31 (SQFLLLVGIPVASALLLAQCL) threads the bilayer. Over 32–518 (RWHCCQWLPG…NHGLELDEKL (487 aa)) the chain is Cytoplasmic. The ZU5 domain maps to 102 to 237 (VFSAREVDHR…FSLYTCVLEA (136 aa)). The segment at 186–400 (QQPSQACAYS…ETWAVPPPVS (215 aa)) is interaction with RELA and NFKB1. Positions 208 to 235 (PLGQPGTHISRDECRILLSHFSLYTCVL) are peptidase S68. Catalysis depends on residues histidine 227 and serine 229. The Death domain maps to 415–494 (QLQMLLEPNS…SAIQNYLNRS (80 aa)).

Belongs to the unc-5 family. In terms of assembly, interacts with p65/RELA and NFKB1.

It localises to the membrane. The protein localises to the cytoplasm. Its function is as follows. Inhibits NF-kappa-B-dependent transcription by impairing NF-kappa-B binding to its targets. The polypeptide is UNC5C-like protein (Unc5cl) (Mus musculus (Mouse)).